We begin with the raw amino-acid sequence, 227 residues long: Uracil phosphoribosyltransferase (227 aa).

Lysine 36–lysine 40 contributes to the GTP binding site. Residues arginine 86, arginine 111, and aspartate 145–threonine 153 each bind 5-phospho-alpha-D-ribose 1-diphosphate. Residues isoleucine 212 and glycine 217 to alanine 219 contribute to the uracil site. Residue aspartate 218 participates in 5-phospho-alpha-D-ribose 1-diphosphate binding.

The protein belongs to the UPRTase family. Mg(2+) serves as cofactor.

It catalyses the reaction UMP + diphosphate = 5-phospho-alpha-D-ribose 1-diphosphate + uracil. Its pathway is pyrimidine metabolism; UMP biosynthesis via salvage pathway; UMP from uracil: step 1/1. Its activity is regulated as follows. Allosterically activated by GTP. Functionally, catalyzes the conversion of uracil and 5-phospho-alpha-D-ribose 1-diphosphate (PRPP) to UMP and diphosphate. In Halobacterium salinarum (strain ATCC 700922 / JCM 11081 / NRC-1) (Halobacterium halobium), this protein is Uracil phosphoribosyltransferase.